A 210-amino-acid polypeptide reads, in one-letter code: Cdc42 effector protein 2 (210 aa).

An N-acetylserine modification is found at Ser-2. One can recognise a CRIB domain in the interval 30-44 (ISPPLGDFRHTIHIG). Residues Ser-31, Ser-101, and Ser-141 each carry the phosphoserine modification. The disordered stretch occupies residues 122 to 171 (PTAQAPPKPPRLHLETPQPSPQEGGSVDIWRIPETGSPNSGLTPESGAEE).

It belongs to the BORG/CEP family. As to quaternary structure, interacts with RHOQ and CDC42 in a GTP-dependent manner, and with SEPT7. In terms of tissue distribution, highly expressed in the heart. Weakly expressed in the pancreas and liver.

The protein localises to the endomembrane system. Its subcellular location is the cytoplasm. The protein resides in the cytoskeleton. Its function is as follows. Probably involved in the organization of the actin cytoskeleton. May act downstream of CDC42 to induce actin filament assembly leading to cell shape changes. Induces pseudopodia formation in fibroblasts in a CDC42-dependent manner. This is Cdc42 effector protein 2 (CDC42EP2) from Homo sapiens (Human).